An 840-amino-acid polypeptide reads, in one-letter code: MPSSKPLAEYARKRDFRQTPEPSGRKPRKDSTGLLRYCVQKHDASRLHYDFRLELDGTLKSWAVPKGPCLDPAVKRLAVQVEDHPLDYADFEGSIPQGHYGAGDVIVWDRGAWTPLDDPREGLEKGHLSFALDGEKLSGRWHLIRTNLRGKQSQWFLVKAKDGEARSLDRFDVLKERPDSVLSERTLLPRHGEAATPAARPARRGKSGGKTPMPEWIAPELASLVEQPPRGEWAYELKLDGYRLMSRIEDGHVRLLTRNGHDWTERLPHLEKALAGLGLQRSWLDGELVVLDEEGRPDFQALQNAFEEGRGENILYVLFDLPYHEGEDLRDVALEERRARLEALLEGRDEDPLRFSATLAEDPRDLLASACKLGLEGVIGKRLGSAYRSRRSNDWIKLKCQLRQEFVIVGYTEPKGSRRHIGALLLGLYSPDEERRLRYAGKVGSGFTAASLKKVRERLEPLAVRSSPLAKVPPARETGSVQWVRPQQLCEVSYAQMTRGGIIRQAVFHGLREDKPAREVTGERPAGPPPLRGARKASAGASRAATAGVRISHPQRLIDPSIQASKLELAEFHARYADLLLRDLRERPVSLVRGPDGIGGELFFQKHAARLKIPGIVQLDPALDPGHPPLLQIRSAEALVGAVQMGSIEFHTWNASLANLERPDRFVLDLDPDPALPWKRMLEATQLSLTLLDELGLRAFLKTSGGKGMHLLVPLERRHGWDEVKDFAQAISQHLARLMPERFSAVSGPRNRVGKIFVDYLRNSRGASTVAAYSVRAREGLPVSVPVFREELDSLQGANQWNLRSLPQRLDELAGDDPWADYAGTRQRISAAMRRQLGRG.

The disordered stretch occupies residues 1–32; the sequence is MPSSKPLAEYARKRDFRQTPEPSGRKPRKDST. Residues 7 to 162 form a 3'-phosphoesterase domain (PE) region; it reads LAEYARKRDF…SQWFLVKAKD (156 aa). Residues H42, H48, and D50 each contribute to the Mn(2+) site. Residues 189–211 form a disordered region; it reads PRHGEAATPAARPARRGKSGGKT. Residues 219-521 are ligase domain (Lig); sequence PELASLVEQP…REDKPAREVT (303 aa). K238 functions as the N6-AMP-lysine intermediate in the catalytic mechanism. 2 residues coordinate Mn(2+): D240 and E376. The tract at residues 514–546 is disordered; sequence DKPAREVTGERPAGPPPLRGARKASAGASRAAT. Residues 536–546 are compositionally biased toward low complexity; sequence KASAGASRAAT. A DNA repair polymerase domain (Pol) region spans residues 549–793; it reads VRISHPQRLI…SVPVFREELD (245 aa). The ATP site is built by F604 and H651. Mn(2+) contacts are provided by D669 and D671. Residues D671 and 704-710 each bind ATP; that span reads SGGKGMH. D759 serves as a coordination point for Mn(2+). Residues S768 and 776 to 778 each bind ATP; that span reads RAR.

It in the N-terminal section; belongs to the LigD 3'-phosphoesterase family. In the central section; belongs to the ATP-dependent DNA ligase family. The protein in the C-terminal section; belongs to the LigD polymerase family. Monomer. Interacts with Ku. Mn(2+) is required as a cofactor.

It carries out the reaction ATP + (deoxyribonucleotide)n-3'-hydroxyl + 5'-phospho-(deoxyribonucleotide)m = (deoxyribonucleotide)n+m + AMP + diphosphate.. With respect to regulation, rNTP addition and end joining activities are stimulated by Ku homodimer. Its function is as follows. With Ku probably forms a non-homologous end joining (NHEJ) repair enzyme, which repairs dsDNA breaks (DSB) with reduced fidelity. Acts as a DNA ligase on singly nicked dsDNA, fills dsDNA gaps (3- or 4- nucleotide gaps, prefers a 5'-phosphate at the gap distal end, prefers dNTPs over rNTPs), has DNA-directed DNA polymerase activity (templated primer extension) and DNA-directed RNA polymerase activity, adds 1 or 2 non-templated rNTP (or less well dNTP) to ssDNA or blunt-end dsDNA (primer extension). Has 3' resection activity, removing 3'-rNMPs from DNA using its 3'-ribonuclease and 3'-phosphatase activities sequentially. Resection requires a 2'-OH in the penultimate nucleoside position (i.e. a ribo- not deoxyribonucleoside), although the 3'-phosphatase activity does not, and its specific activity is 16-fold higher on a DNA substrate. On appropriate substrates will extend a DNA primer to the end of the template strand and then incorporate a non-templated nucleotide. In terms of biological role, the preference of the polymerase domain for rNTPs over dNTPs may be advantageous in quiescent cells where the dNTP pool may be limiting. The protein is Multifunctional non-homologous end joining protein LigD (ligD) of Pseudomonas aeruginosa (strain ATCC 15692 / DSM 22644 / CIP 104116 / JCM 14847 / LMG 12228 / 1C / PRS 101 / PAO1).